Here is a 216-residue protein sequence, read N- to C-terminus: Phosducin-like protein 3 (216 aa).

Residues 13–59 are a coiled coil; sequence AKTIEQQLDQQLDRLDNLDSDDLKVLREQRLREMKDLNNKKQEWLRN. Residues 29-163 enclose the Phosducin domain; it reads NLDSDDLKVL…DLGNCDDFAT (135 aa).

Belongs to the phosducin family. Highly expressed in germline cells of the testis from the spermatogonia stage until the early spermatid stage but is no longer observed in late-stage spermatids in the distal end of the testis.

The enzyme catalyses [thioredoxin]-dithiol + NADP(+) = [thioredoxin]-disulfide + NADPH + H(+). Its function is as follows. Has redox activity with thioredoxin. Required for male fertility and maturation of sperm past the canoe stage during spermiogenesis. This is Phosducin-like protein 3 from Drosophila melanogaster (Fruit fly).